Here is a 162-residue protein sequence, read N- to C-terminus: Caveolin-2 (162 aa).

The Cytoplasmic portion of the chain corresponds to 1–86 (MGLETEKADV…FEISKYVMYK (86 aa)). Y19 bears the Phosphotyrosine; by SRC mark. A phosphoserine mark is found at S20 and S23. Y27 bears the Phosphotyrosine mark. At S36 the chain carries Phosphoserine. The helical intramembrane region spans 87 to 107 (FLTVFLAIPLAFIAGILFATL). The Cytoplasmic portion of the chain corresponds to 108-162 (SCLHIWILMPFVKTCLMVLPSVQTIWKSVTDVVIGPLCTSVGRSFSSVSMQLSHD).

Belongs to the caveolin family. As to quaternary structure, monomer or homodimer. Interacts with CAV1; the interaction forms a stable heterooligomeric complex that is required for targeting to lipid rafts and for caveolae formation. Tyrosine phosphorylated forms do not form heterooligomers with the Tyr-19-phosphorylated form existing as a monomer or dimer, and the Tyr-27-form as a monomer only. Interacts (tyrosine phosphorylated form) with the SH2 domain-containing proteins, RASA1, NCK1 and SRC. Interacts (tyrosine phosphorylated form) with INSR, the interaction (Tyr-27-phosphorylated form) is increased on insulin stimulation. Interacts (Tyr-19 phosphorylated form) with MAPK1 (phosphorylated form); the interaction, promoted by insulin, leads to nuclear location and MAPK1 activation. Interacts with STAT3; the interaction is increased on insulin-induced tyrosine phosphorylation leading to STAT activation. In terms of processing, phosphorylated on serine and tyrosine residues. CAV1 promotes phosphorylation on Ser-23 which then targets the complex to the plasma membrane, lipid rafts and caveolae. Phosphorylation on Ser-36 appears to modulate mitosis in endothelial cells. Phosphorylation on both Tyr-19 and Tyr-27 is required for insulin-induced 'Ser-727' phosphorylation of STAT3 and its activation. Phosphorylation on Tyr-19 is required for insulin-induced phosphorylation of MAPK1 and DNA binding of STAT3. Tyrosine phosphorylation is induced by both EGF and insulin.

The protein resides in the nucleus. The protein localises to the cytoplasm. It is found in the golgi apparatus membrane. It localises to the cell membrane. Its subcellular location is the membrane. The protein resides in the caveola. Its function is as follows. May act as a scaffolding protein within caveolar membranes. Interacts directly with G-protein alpha subunits and can functionally regulate their activity. Acts as an accessory protein in conjunction with CAV1 in targeting to lipid rafts and driving caveolae formation. The Ser-36 phosphorylated form has a role in modulating mitosis in endothelial cells. Positive regulator of cellular mitogenesis of the MAPK signaling pathway. Required for the insulin-stimulated nuclear translocation and activation of MAPK1 and STAT3, and the subsequent regulation of cell cycle progression. The chain is Caveolin-2 (Cav2) from Mus musculus (Mouse).